A 574-amino-acid polypeptide reads, in one-letter code: Proline--tRNA ligase (574 aa).

This sequence belongs to the class-II aminoacyl-tRNA synthetase family. ProS type 1 subfamily. As to quaternary structure, homodimer.

It localises to the cytoplasm. It catalyses the reaction tRNA(Pro) + L-proline + ATP = L-prolyl-tRNA(Pro) + AMP + diphosphate. Catalyzes the attachment of proline to tRNA(Pro) in a two-step reaction: proline is first activated by ATP to form Pro-AMP and then transferred to the acceptor end of tRNA(Pro). As ProRS can inadvertently accommodate and process non-cognate amino acids such as alanine and cysteine, to avoid such errors it has two additional distinct editing activities against alanine. One activity is designated as 'pretransfer' editing and involves the tRNA(Pro)-independent hydrolysis of activated Ala-AMP. The other activity is designated 'posttransfer' editing and involves deacylation of mischarged Ala-tRNA(Pro). The misacylated Cys-tRNA(Pro) is not edited by ProRS. This Desulfovibrio desulfuricans (strain ATCC 27774 / DSM 6949 / MB) protein is Proline--tRNA ligase.